The primary structure comprises 148 residues: MTKTVYVLNGPNLNLLGTREPQVYGSQTLADVEQLCTAACARHGLALVFRQSNHEGALVDWIHEASRLHAAGQLAGVVLNAAAYTHTSVALLDAVKGTGVPVVELHISNVHARESFRHHSYLAGAARAVMCGFGVQGYALAIDGLAQW.

The active-site Proton acceptor is Y24. The substrate site is built by N80, H86, and D93. H106 serves as the catalytic Proton donor. Substrate is bound by residues 107–108 (IS) and R117.

It belongs to the type-II 3-dehydroquinase family. As to quaternary structure, homododecamer.

The enzyme catalyses 3-dehydroquinate = 3-dehydroshikimate + H2O. It participates in metabolic intermediate biosynthesis; chorismate biosynthesis; chorismate from D-erythrose 4-phosphate and phosphoenolpyruvate: step 3/7. In terms of biological role, catalyzes a trans-dehydration via an enolate intermediate. This is 3-dehydroquinate dehydratase from Acidovorax ebreus (strain TPSY) (Diaphorobacter sp. (strain TPSY)).